The primary structure comprises 590 residues: Fucose-1-phosphate guanylyltransferase (590 aa).

Expressed at highest levels in brain, moderately in testis, ovary and kidney, and weakly in liver, spleen, heart and lung.

The protein resides in the cytoplasm. It catalyses the reaction beta-L-fucose 1-phosphate + GTP + H(+) = GDP-beta-L-fucose + diphosphate. Its function is as follows. Catalyzes the formation of GDP-L-fucose from GTP and L-fucose-1-phosphate. Functions as a salvage pathway to reutilize L-fucose arising from the turnover of glycoproteins and glycolipids. In Mus musculus (Mouse), this protein is Fucose-1-phosphate guanylyltransferase.